A 289-amino-acid polypeptide reads, in one-letter code: Diaminopimelate epimerase (289 aa).

Substrate contacts are provided by N13, Q47, and N67. C76 (proton donor) is an active-site residue. Residues 77-78, N167, N200, and 218-219 each bind substrate; these read GN and ER. The active-site Proton acceptor is the C227. Residue 228–229 coordinates substrate; the sequence is GT.

This sequence belongs to the diaminopimelate epimerase family. As to quaternary structure, homodimer.

The protein resides in the cytoplasm. It catalyses the reaction (2S,6S)-2,6-diaminopimelate = meso-2,6-diaminopimelate. Its pathway is amino-acid biosynthesis; L-lysine biosynthesis via DAP pathway; DL-2,6-diaminopimelate from LL-2,6-diaminopimelate: step 1/1. Functionally, catalyzes the stereoinversion of LL-2,6-diaminopimelate (L,L-DAP) to meso-diaminopimelate (meso-DAP), a precursor of L-lysine and an essential component of the bacterial peptidoglycan. This is Diaminopimelate epimerase from Burkholderia pseudomallei (strain K96243).